A 362-amino-acid chain; its full sequence is Phosphoserine aminotransferase (362 aa).

An L-glutamate-binding site is contributed by Arg-42. Residues 76–77, Trp-102, Thr-152, Asp-173, and Gln-196 contribute to the pyridoxal 5'-phosphate site; that span reads AS. Lys-197 is subject to N6-(pyridoxal phosphate)lysine. 238-239 contacts pyridoxal 5'-phosphate; that stretch reads NT.

It belongs to the class-V pyridoxal-phosphate-dependent aminotransferase family. SerC subfamily. As to quaternary structure, homodimer. Pyridoxal 5'-phosphate serves as cofactor.

The protein resides in the cytoplasm. The enzyme catalyses O-phospho-L-serine + 2-oxoglutarate = 3-phosphooxypyruvate + L-glutamate. It catalyses the reaction 4-(phosphooxy)-L-threonine + 2-oxoglutarate = (R)-3-hydroxy-2-oxo-4-phosphooxybutanoate + L-glutamate. It participates in amino-acid biosynthesis; L-serine biosynthesis; L-serine from 3-phospho-D-glycerate: step 2/3. Its pathway is cofactor biosynthesis; pyridoxine 5'-phosphate biosynthesis; pyridoxine 5'-phosphate from D-erythrose 4-phosphate: step 3/5. Catalyzes the reversible conversion of 3-phosphohydroxypyruvate to phosphoserine and of 3-hydroxy-2-oxo-4-phosphonooxybutanoate to phosphohydroxythreonine. The sequence is that of Phosphoserine aminotransferase from Chromobacterium violaceum (strain ATCC 12472 / DSM 30191 / JCM 1249 / CCUG 213 / NBRC 12614 / NCIMB 9131 / NCTC 9757 / MK).